The following is a 142-amino-acid chain: Large ribosomal subunit protein uL11 (142 aa).

This sequence belongs to the universal ribosomal protein uL11 family. In terms of assembly, part of the ribosomal stalk of the 50S ribosomal subunit. Interacts with L10 and the large rRNA to form the base of the stalk. L10 forms an elongated spine to which L12 dimers bind in a sequential fashion forming a multimeric L10(L12)X complex. In terms of processing, one or more lysine residues are methylated.

Its function is as follows. Forms part of the ribosomal stalk which helps the ribosome interact with GTP-bound translation factors. This is Large ribosomal subunit protein uL11 from Shewanella sp. (strain ANA-3).